Reading from the N-terminus, the 289-residue chain is Prepilin leader peptidase/N-methyltransferase (289 aa).

The helical transmembrane segment at 13–33 (AFVLCALVLGLLVGSFLNVVI) threads the bilayer. Zn(2+) is bound by residues Cys-72, Cys-75, Cys-97, and Cys-100. 5 consecutive transmembrane segments (helical) span residues 128–148 (FSWQAGAMLLLTWGLLAMSMI), 159–179 (LVLPLLWLGLIINSFGLFASL), 183–203 (LWGAVVGYLALWSVYWLFKLV), 228–248 (VLPLTILLSSVVGAVLGTVML), and 256–276 (GTPIPFGPYLAIAGWVALLWG).

Belongs to the peptidase A24 family. The cofactor is Zn(2+).

The protein resides in the cell inner membrane. The catalysed reaction is Typically cleaves a -Gly-|-Phe- bond to release an N-terminal, basic peptide of 5-8 residues from type IV prepilin, and then N-methylates the new N-terminal amino group, the methyl donor being S-adenosyl-L-methionine.. In terms of biological role, plays an essential role in type IV pili and type II pseudopili formation by proteolytically removing the leader sequence from substrate proteins and subsequently monomethylating the alpha-amino group of the newly exposed N-terminal phenylalanine. The protein is Prepilin leader peptidase/N-methyltransferase (pilD) of Stutzerimonas stutzeri (Pseudomonas stutzeri).